Consider the following 398-residue polypeptide: MAVSGARPRMTWACDPVWTRGRLVPEQEGTRSAFRRDCDRIIHSTAFRRLKHKTQVFVFHEGDHYRTRLTHTLEVAQIARSIARALGLDEDLAEALALAHDLGHPPFAHAGERALDACMADYGGFDHNAQSLRVVTRLERRYAGFDGLNLTWETLEGIAKHNGPLTDRSGKPLGAAGDVLPHAIVAHSAVQDLELWTHAGPEAQVAAISDDIAYDVHDLDDGLRAGLFHLDELEALPLVGAVLAEVRASWPSLETGRVIHEVMRRLITRFVEDVVRETETRARAAKVRSSFDVRMAGAPLVAFSAGMRTAEAAVKGFLFPHMYRHARVNRIMDEAQGVVRDLFALFMARPQEMPADWQLEGAPPERMARRVADYIAGMTDRYALDQHARFFDTTPELR.

The region spanning 68–215 (RLTHTLEVAQ…AAISDDIAYD (148 aa)) is the HD domain.

This sequence belongs to the dGTPase family. Type 2 subfamily.

The polypeptide is Deoxyguanosinetriphosphate triphosphohydrolase-like protein (Azorhizobium caulinodans (strain ATCC 43989 / DSM 5975 / JCM 20966 / LMG 6465 / NBRC 14845 / NCIMB 13405 / ORS 571)).